Here is a 185-residue protein sequence, read N- to C-terminus: Ribosome-recycling factor (185 aa).

Belongs to the RRF family.

Its subcellular location is the cytoplasm. Responsible for the release of ribosomes from messenger RNA at the termination of protein biosynthesis. May increase the efficiency of translation by recycling ribosomes from one round of translation to another. In Ehrlichia chaffeensis (strain ATCC CRL-10679 / Arkansas), this protein is Ribosome-recycling factor.